Reading from the N-terminus, the 217-residue chain is Heart- and neural crest derivatives-expressed protein 2 (217 aa).

A disordered region spans residues aspartate 76–asparagine 116. Over residues valine 83–glycine 94 the composition is skewed to gly residues. Over residues proline 97 to threonine 112 the composition is skewed to basic residues. The region spanning lysine 99–leucine 151 is the bHLH domain.

In terms of assembly, efficient DNA binding requires dimerization with another bHLH protein. Forms homodimers and heterodimers with TCF3 gene products E12 and E47, HAND1 and HEY1, HEY2 and HEYL (hairy-related transcription factors).

It localises to the nucleus. Functionally, essential for cardiac morphogenesis, particularly for the formation of the right ventricle and of the aortic arch arteries. Required for vascular development and regulation of angiogenesis, possibly through a VEGF signaling pathway. Also plays an important role in limb development, particularly in the establishment of anterior-posterior polarization, acting as an upstream regulator of sonic hedgehog (SHH) induction in the limb bud. Is involved in the development of branchial arches, which give rise to unique structures in the head and neck. Binds DNA on E-box consensus sequence 5'-CANNTG-3'. The protein is Heart- and neural crest derivatives-expressed protein 2 (Hand2) of Rattus norvegicus (Rat).